We begin with the raw amino-acid sequence, 142 residues long: MESMGNNSPGPEIRALARNIRMSAHKARRVINQIRGRSYGQALMILELMPYGACYPISQLIHSAAANANHNMGLNKANLLVGRVEVNEGAVLKRIQPRAQGRGYPIQKPTCHITIVSEEISRSNDPIMSIESRKKGYVWRRK.

Belongs to the universal ribosomal protein uL22 family. As to quaternary structure, part of the 50S ribosomal subunit.

Its subcellular location is the plastid. The protein localises to the chloroplast. This protein binds specifically to 23S rRNA. Functionally, the globular domain of the protein is located near the polypeptide exit tunnel on the outside of the subunit, while an extended beta-hairpin is found that lines the wall of the exit tunnel in the center of the 70S ribosome. The protein is Large ribosomal subunit protein uL22c (rpl22) of Pinus koraiensis (Korean pine).